A 147-amino-acid chain; its full sequence is Large ribosomal subunit protein uL13 (147 aa).

Belongs to the universal ribosomal protein uL13 family. Part of the 50S ribosomal subunit.

Its function is as follows. This protein is one of the early assembly proteins of the 50S ribosomal subunit, although it is not seen to bind rRNA by itself. It is important during the early stages of 50S assembly. The chain is Large ribosomal subunit protein uL13 from Kocuria rhizophila (strain ATCC 9341 / DSM 348 / NBRC 103217 / DC2201).